An 82-amino-acid polypeptide reads, in one-letter code: MSSGSLLLLLGLLTLWAELTPISTKDRPSCDKAPDTERCKRNVYAFYYNPSARDCLQFVYGGCDGNGKHFRSKALCLFHCHR.

Residues 1-24 (MSSGSLLLLLGLLTLWAELTPIST) form the signal peptide. A BPTI/Kunitz inhibitor domain is found at 30–80 (CDKAPDTERCKRNVYAFYYNPSARDCLQFVYGGCDGNGKHFRSKALCLFHC). 3 cysteine pairs are disulfide-bonded: cysteine 30-cysteine 80, cysteine 39-cysteine 63, and cysteine 55-cysteine 76.

The protein belongs to the venom Kunitz-type family. Expressed by the venom gland.

Its subcellular location is the secreted. Its function is as follows. Serine protease inhibitor that inhibits trypsin (Ki=55.62 nM). This Bungarus multicinctus (Many-banded krait) protein is Kunitz-type serine protease inhibitor PILP-1.